We begin with the raw amino-acid sequence, 133 residues long: Ribosome-binding factor A (133 aa).

The protein belongs to the RbfA family. Monomer. Binds 30S ribosomal subunits, but not 50S ribosomal subunits or 70S ribosomes.

The protein localises to the cytoplasm. One of several proteins that assist in the late maturation steps of the functional core of the 30S ribosomal subunit. Associates with free 30S ribosomal subunits (but not with 30S subunits that are part of 70S ribosomes or polysomes). Required for efficient processing of 16S rRNA. May interact with the 5'-terminal helix region of 16S rRNA. The polypeptide is Ribosome-binding factor A (Cytophaga hutchinsonii (strain ATCC 33406 / DSM 1761 / CIP 103989 / NBRC 15051 / NCIMB 9469 / D465)).